We begin with the raw amino-acid sequence, 486 residues long: UDP-N-acetylmuramate--L-alanine ligase (486 aa).

123 to 129 (GTHGKTT) is an ATP binding site.

Belongs to the MurCDEF family.

It localises to the cytoplasm. It carries out the reaction UDP-N-acetyl-alpha-D-muramate + L-alanine + ATP = UDP-N-acetyl-alpha-D-muramoyl-L-alanine + ADP + phosphate + H(+). It functions in the pathway cell wall biogenesis; peptidoglycan biosynthesis. Cell wall formation. The chain is UDP-N-acetylmuramate--L-alanine ligase from Pseudomonas fluorescens (strain Pf0-1).